The chain runs to 596 residues: Probable lysosomal cobalamin transporter (596 aa).

10 helical membrane passes run A7–F27, I46–V66, I95–T115, T145–A165, L196–L216, L313–T333, I350–V370, V376–I396, M420–I440, and F507–F527. The interval W566–D596 is disordered. A compositionally biased stretch (basic and acidic residues) spans I587–D596.

This sequence belongs to the LIMR family. LMBRD1 subfamily.

It is found in the lysosome membrane. Probable lysosomal cobalamin transporter. Required to export cobalamin from lysosomes allowing its conversion to cofactors. In Sclerotinia sclerotiorum (strain ATCC 18683 / 1980 / Ss-1) (White mold), this protein is Probable lysosomal cobalamin transporter.